A 437-amino-acid polypeptide reads, in one-letter code: 3-deoxy-D-manno-octulosonic acid transferase (437 aa).

Residues 16–36 (VVLVCAFVIALPKLLYKMLVY) traverse the membrane as a helical; Signal-anchor segment. The Proton acceptor role is filled by Glu70. Residues 279–280 (PR), 319–321 (IGL), and 346–349 (NLLE) contribute to the CMP site.

This sequence belongs to the glycosyltransferase group 1 family. Glycosyltransferase 30 subfamily.

Its subcellular location is the cell inner membrane. It carries out the reaction lipid IVA (E. coli) + CMP-3-deoxy-beta-D-manno-octulosonate = alpha-Kdo-(2-&gt;6)-lipid IVA (E. coli) + CMP + H(+). The enzyme catalyses alpha-Kdo-(2-&gt;6)-lipid IVA (E. coli) + CMP-3-deoxy-beta-D-manno-octulosonate = alpha-Kdo-(2-&gt;4)-alpha-Kdo-(2-&gt;6)-lipid IVA (E. coli) + CMP + H(+). It catalyses the reaction alpha-Kdo-(2-&gt;4)-alpha-Kdo-(2-&gt;6)-lipid IVA (E. coli) + CMP-3-deoxy-beta-D-manno-octulosonate = alpha-Kdo-(2-&gt;8)-alpha-Kdo-(2-&gt;4)-alpha-Kdo-(2-&gt;6)-lipid IVA (E. coli) + CMP + H(+). It functions in the pathway bacterial outer membrane biogenesis; LPS core biosynthesis. In terms of biological role, involved in lipopolysaccharide (LPS) biosynthesis. Catalyzes the transfer of three 3-deoxy-D-manno-octulosonate (Kdo) residues from CMP-Kdo to lipid IV(A), the tetraacyldisaccharide-1,4'-bisphosphate precursor of lipid A. Thus generates the genus-specific LPS epitope of Chlamydia, composed of the trisaccharide alpha-Kdo-(2-&gt;8)-alpha-Kdo-(2-&gt;4)-alpha-Kdo. This is 3-deoxy-D-manno-octulosonic acid transferase (waaA) from Chlamydia pneumoniae (Chlamydophila pneumoniae).